A 416-amino-acid chain; its full sequence is Argininosuccinate synthase (416 aa).

ATP-binding positions include 11–19 (AYSGGLDTS) and Ala37. Tyr88 is an L-citrulline binding site. Phosphotyrosine is present on residues Tyr88 and Tyr114. 116 to 124 (AHGATGKGN) serves as a coordination point for ATP. Residues Thr120, Asn124, and Asp125 each coordinate L-aspartate. Position 124 (Asn124) interacts with L-citrulline. Positions 128, 181, 190, 271, and 283 each coordinate L-citrulline. Ser181 is subject to Phosphoserine.

It belongs to the argininosuccinate synthase family. As to quaternary structure, homotetramer.

It is found in the cytoplasm. The protein localises to the cytosol. The enzyme catalyses L-citrulline + L-aspartate + ATP = 2-(N(omega)-L-arginino)succinate + AMP + diphosphate + H(+). The protein operates within amino-acid biosynthesis; L-arginine biosynthesis; L-arginine from L-ornithine and carbamoyl phosphate: step 2/3. It functions in the pathway nitrogen metabolism; urea cycle; (N(omega)-L-arginino)succinate from L-aspartate and L-citrulline: step 1/1. In terms of biological role, one of the enzymes of the urea cycle, the metabolic pathway transforming neurotoxic amonia produced by protein catabolism into inocuous urea in the liver of ureotelic animals. Catalyzes the formation of arginosuccinate from aspartate, citrulline and ATP and together with ASL it is responsible for the biosynthesis of arginine in most body tissues. The polypeptide is Argininosuccinate synthase (Gallus gallus (Chicken)).